We begin with the raw amino-acid sequence, 469 residues long: Origin recognition complex subunit 6 (469 aa).

Composition is skewed to low complexity over residues 218–234 and 275–308; these read SSTL…TAPK and ATPT…LSST. 4 disordered regions span residues 218-241, 275-309, 356-423, and 436-469; these read SSTL…PIPS, ATPT…SSTN, ESPF…EGDL, and KEQQ…SFFK. Composition is skewed to basic and acidic residues over residues 380 to 390 and 409 to 423; these read SRDELEKESEL and QKEK…EGDL. Over residues 454 to 469 the composition is skewed to polar residues; that stretch reads TPVNATKQLTLDSFFK.

This sequence belongs to the ORC6 family. In terms of assembly, ORC is composed of six subunits.

Its subcellular location is the nucleus. Functionally, component of the origin recognition complex (ORC) that binds origins of replication. DNA-binding is ATP-dependent, however specific DNA sequences that define origins of replication have not been identified so far. ORC is required to assemble the pre-replication complex necessary to initiate DNA replication. This Dictyostelium discoideum (Social amoeba) protein is Origin recognition complex subunit 6 (orcF).